Here is a 186-residue protein sequence, read N- to C-terminus: Elongation factor P (186 aa).

This sequence belongs to the elongation factor P family.

It is found in the cytoplasm. Its pathway is protein biosynthesis; polypeptide chain elongation. In terms of biological role, involved in peptide bond synthesis. Stimulates efficient translation and peptide-bond synthesis on native or reconstituted 70S ribosomes in vitro. Probably functions indirectly by altering the affinity of the ribosome for aminoacyl-tRNA, thus increasing their reactivity as acceptors for peptidyl transferase. The sequence is that of Elongation factor P from Prochlorococcus marinus (strain SARG / CCMP1375 / SS120).